The primary structure comprises 566 residues: Type 3 secretion system secretin (566 aa).

The N-terminal stretch at 1 to 22 (MKKFNIKSLTLLIVLLPLIVNA) is a signal peptide.

Belongs to the bacterial secretin family. T3SS SctC subfamily. The core secretion machinery of the T3SS is composed of approximately 20 different proteins, including cytoplasmic components, a base, an export apparatus and a needle. This subunit is part of the base, which anchors the injectisome in the bacterial cell envelope. Forms a stable homooligomeric complex.

It is found in the cell outer membrane. Component of the type III secretion system (T3SS), also called injectisome, which is used to inject bacterial effector proteins into eukaryotic host cells. Forms a ring-shaped multimeric structure with an apparent central pore in the outer membrane. The sequence is that of Type 3 secretion system secretin from Shigella sonnei.